The primary structure comprises 892 residues: Ice-binding protein 1 (892 aa).

An N-terminal signal peptide occupies residues 1–23 (MNHSIKKTYLVFTMLLGFILLAG). A lipid anchor (N-palmitoyl cysteine) is attached at Cys-24. Cys-24 carries the S-diacylglycerol cysteine lipid modification. BIG2 domains lie at 43-111 (TSIA…ITAS), 134-205 (TALA…SLGS), 221-288 (SIAL…ITAD), 306-386 (TSIM…TVTV), 392-471 (TSIA…TNLT), 478-558 (NSIV…NLTV), and 565-638 (SIDV…QASL). The Ice-binding site motif (T-A/G-X-T/N) motif lies at 866-869 (TGAN).

The protein belongs to the ice-binding protein family.

It localises to the cell outer membrane. Ice-binding adhesion protein that adsorbs this bacterium onto ice to maintain a favorable position in its aquatic habitat. Inhibits growth of the ice crystals. Has high thermal hysteresis (TH) activity, which is the ability to lower the freezing point of an aqueous solution below its melting point. The TH activity of this protein is approximately 1.4 degrees Celsius at 25 uM and little below 2 degrees Celsius at 80 uM. This Shewanella frigidimarina (strain NCIMB 400) protein is Ice-binding protein 1.